The following is a 543-amino-acid chain: Probable E3 ubiquitin-protein ligase ARI9 (543 aa).

Residues 1–26 (MDFSDDDMIDNKSGEENYSYGGGNES) form a disordered region. Residues 124–332 (VNIQCGICFE…RHSGACNRFV (209 aa)) are TRIAD supradomain. The Zn(2+) site is built by Cys128, Cys131, Cys145, His147, Cys150, Cys153, Cys173, Cys178, Cys217, Cys222, Cys240, Cys242, Cys247, Cys250, His255, Cys260, Cys287, and Cys290. An RING-type 1 zinc finger spans residues 128–178 (CGICFESYTREEIARVSCGHPYCKTCWAGYITTKIEDGPGCLRVKCPEPSC). The IBR-type zinc finger occupies 197–260 (EKYSRYILRS…SEDAHSPVDC (64 aa)). The segment at 287–317 (CPECKRPIEKNDGCNHMTCSAPCGHEFCWIC) adopts an RING-type 2; atypical zinc-finger fold. Residue Cys300 is part of the active site. The Zn(2+) site is built by Cys305, Cys309, Cys314, Cys317, His324, and Cys328.

It belongs to the RBR family. Ariadne subfamily. Requires Zn(2+) as cofactor.

The enzyme catalyses [E2 ubiquitin-conjugating enzyme]-S-ubiquitinyl-L-cysteine + [acceptor protein]-L-lysine = [E2 ubiquitin-conjugating enzyme]-L-cysteine + [acceptor protein]-N(6)-ubiquitinyl-L-lysine.. It participates in protein modification; protein ubiquitination. In terms of biological role, might act as an E3 ubiquitin-protein ligase, or as part of E3 complex, which accepts ubiquitin from specific E2 ubiquitin-conjugating enzymes and then transfers it to substrates. The chain is Probable E3 ubiquitin-protein ligase ARI9 (ARI9) from Arabidopsis thaliana (Mouse-ear cress).